The chain runs to 626 residues: UPF0313 protein MM_1287 (626 aa).

The interval 206-227 (GKGKEKAGEQDESENATEEVAK) is disordered. In terms of domain architecture, Radical SAM core spans 320-589 (ALEMVKFSLT…AMQRALMHYR (270 aa)). [4Fe-4S] cluster is bound by residues Cys334, Cys338, and Cys341.

It belongs to the UPF0313 family. It depends on [4Fe-4S] cluster as a cofactor.

The sequence is that of UPF0313 protein MM_1287 from Methanosarcina mazei (strain ATCC BAA-159 / DSM 3647 / Goe1 / Go1 / JCM 11833 / OCM 88) (Methanosarcina frisia).